Here is a 115-residue protein sequence, read N- to C-terminus: NADH-ubiquinone oxidoreductase chain 3 (115 aa).

Helical transmembrane passes span 3–23 (LPLALTTSITLTLLLVTIAFW), 55–75 (FFLVAITFLLFDLEIALLLPL), and 86–106 (LMLTVALVLITILAAGLAYEW).

It belongs to the complex I subunit 3 family. As to quaternary structure, core subunit of respiratory chain NADH dehydrogenase (Complex I) which is composed of 45 different subunits. Interacts with TMEM186. Interacts with TMEM242.

The protein localises to the mitochondrion inner membrane. It catalyses the reaction a ubiquinone + NADH + 5 H(+)(in) = a ubiquinol + NAD(+) + 4 H(+)(out). Core subunit of the mitochondrial membrane respiratory chain NADH dehydrogenase (Complex I) which catalyzes electron transfer from NADH through the respiratory chain, using ubiquinone as an electron acceptor. Essential for the catalytic activity of complex I. The polypeptide is NADH-ubiquinone oxidoreductase chain 3 (Lemur catta (Ring-tailed lemur)).